Consider the following 1215-residue polypeptide: Inner capsid protein VP3 (1215 aa).

The tract at residues 1–81 is disordered; it reads MPRRPRRNAK…RVDNDGDVIT (81 aa). Residues 21-44 show a composition bias toward low complexity; it reads LVAPAANASVSSTVNTTTSPTLAA. The C2H2-type zinc finger occupies 118–141; that stretch reads YRCNVCNAEFPSMSAMTEHLRTSH.

This sequence belongs to the turreted BTV-fold inner capsid family. Homodecamer; each decamer is made up of two conformers of VP2, called VP2A and VP2B. 12 homodecamers assemble to form an icosahedral capsid. Interacts with VP6.

Its subcellular location is the virion. Its function is as follows. Inner capsid protein that self-assembles to form an icosahedral capsid with a T=2 symmetry, which consists of 120 copies of VP2, with channels at each of its five-fold vertices. This capsid constitutes the innermost concentric layer of the viral mature particle. The sequence is that of Inner capsid protein VP3 (S3) from Ctenopharyngodon idella (Grass carp).